We begin with the raw amino-acid sequence, 527 residues long: FAD-dependent monooxygenase CTB5 (527 aa).

The region spanning 78-255 (SDLHPSCIAL…TAVTLKTFGQ (178 aa)) is the FAD-binding PCMH-type domain.

The protein belongs to the oxygen-dependent FAD-linked oxidoreductase family.

It participates in mycotoxin biosynthesis. FAD-dependent monooxygenase; part of the gene cluster that mediates the biosynthesis of cercosporin, a light-activated, non-host-selective toxin. The perylenequinone chromophore of cercosporin absorbs light energy to attain an electronically-activated triplet state and produces active oxygen species such as the hydroxyl radical, superoxide, hydrogen peroxide or singlet oxygen upon reaction with oxygen molecules. These reactive oxygen species cause damage to various cellular components including lipids, proteins and nucleic acids. The first step of cercosporin biosynthesis is performed by the polyketide synthase CTB1 which catalyzes the formation of nor-toralactone. The starter unit acyltransferase (SAT) domain of CTB1 initiates polyketide extension by the selective utilization of acetyl-CoA, which is elongated to the heptaketide in the beta-ketoacyl synthase (KS) domain by successive condensations with six malonyl units introduced by the malonyl acyltransferase (MAT) domain. The product template (PT) domain catalyzes C4-C9 and C2-C11 aldol cyclizations and dehydrations to a trihydroxynaphthalene, which is thought to be delivered to the thioesterase (TE) domain for product release. The bifunctional enzyme CTB3 then methylates nor-toralactone to toralactone before conducting an unusual oxidative aromatic ring opening. The O-methyltransferase CTB2 further methylates the nascent OH-6 of the CBT3 product, blocking further oxidation at this site before the reductase CTB6 reduces the 2-oxopropyl ketone at position C7, giving naphthalene. The FAD-dependent monooxygenase CTB5 in concert with the multicopper oxidase CTB12 are responsible for homodimerization of naphthalene with CTB7 installing the dioxepine moiety, finally producing cercosporin. The fasciclin domain-containing protein CTB11 might act with CTB5 and CTB12 whereas the roles of CTB9 and CTB10 have still to be elucidated. This Cercospora beticola (Sugarbeet leaf spot fungus) protein is FAD-dependent monooxygenase CTB5.